A 578-amino-acid polypeptide reads, in one-letter code: Probable acyl-activating enzyme 12, peroxisomal (578 aa).

A Microbody targeting signal motif is present at residues 576–578 (SRL).

Belongs to the ATP-dependent AMP-binding enzyme family. Expressed at low levels in leaves.

Its subcellular location is the peroxisome. May act as an acid--thiol ligase that activates carboxylic acids by forming acyl-CoAs. This chain is Probable acyl-activating enzyme 12, peroxisomal (AAE12), found in Arabidopsis thaliana (Mouse-ear cress).